A 463-amino-acid chain; its full sequence is Cysteine--tRNA ligase (463 aa).

A Zn(2+)-binding site is contributed by C30. The short motif at 32–42 is the 'HIGH' region element; the sequence is MTVYDYCHVGH. Positions 214, 239, and 243 each coordinate Zn(2+). Positions 271–275 match the 'KMSKS' region motif; that stretch reads KMSKS. K274 lines the ATP pocket.

Belongs to the class-I aminoacyl-tRNA synthetase family. Monomer. Zn(2+) is required as a cofactor.

It is found in the cytoplasm. The enzyme catalyses tRNA(Cys) + L-cysteine + ATP = L-cysteinyl-tRNA(Cys) + AMP + diphosphate. The polypeptide is Cysteine--tRNA ligase (Ralstonia pickettii (strain 12J)).